A 292-amino-acid chain; its full sequence is Ribosomal protein L11 methyltransferase (292 aa).

S-adenosyl-L-methionine-binding residues include Thr-144, Gly-165, Asp-187, and Asn-229.

This sequence belongs to the methyltransferase superfamily. PrmA family.

It is found in the cytoplasm. It catalyses the reaction L-lysyl-[protein] + 3 S-adenosyl-L-methionine = N(6),N(6),N(6)-trimethyl-L-lysyl-[protein] + 3 S-adenosyl-L-homocysteine + 3 H(+). Methylates ribosomal protein L11. The polypeptide is Ribosomal protein L11 methyltransferase (Pseudomonas savastanoi pv. phaseolicola (strain 1448A / Race 6) (Pseudomonas syringae pv. phaseolicola (strain 1448A / Race 6))).